The sequence spans 293 residues: Calcium uniporter protein 2, mitochondrial (293 aa).

Residues 1–33 (MWSVMGLVRRTAMSSTVNKASPVRSLLGGFRCL) constitute a mitochondrion transit peptide. The chain crosses the membrane as a helical span at residues 168 to 188 (ILWGGLGYSVVQIGIFVRLTF). The Selectivity filter motif lies at 193 to 201 (WDVMEPITF). Ca(2+) is bound at residue Glu197. A helical membrane pass occupies residues 198–218 (PITFFTTATGIIVGYAYFLMT).

Belongs to the MCU (TC 1.A.77) family.

The protein resides in the mitochondrion inner membrane. The catalysed reaction is Ca(2+)(in) = Ca(2+)(out). Mitochondrial inner membrane calcium uniporter that mediates calcium uptake into mitochondria. Constitutes a pore-forming and calcium-conducting subunit. Mitochondrial calcium homeostasis plays key roles in cellular physiology and regulates cell bioenergetics, cytoplasmic calcium signals and activation of cell death pathways. In Arabidopsis thaliana (Mouse-ear cress), this protein is Calcium uniporter protein 2, mitochondrial.